Here is a 1797-residue protein sequence, read N- to C-terminus: Non-reducing polyketide synthase nscA (1797 aa).

An N-terminal acylcarrier protein transacylase domain (SAT) region spans residues 17–256 (SDDLKDLFRR…PLPVYDGLCH (240 aa)). A Ketosynthase family 3 (KS3) domain is found at 392–825 (SSKLAIVGMA…GGNTTLLLED (434 aa)). Catalysis depends on for beta-ketoacyl synthase activity residues Cys565, His700, and His743. The segment at 931 to 1251 (FTGQGAYYSG…SLVTLHLAGL (321 aa)) is malonyl-CoA:ACP transacylase (MAT) domain. Residues 1318–1637 (TSLIHQITAE…RLLMDRFFSP (320 aa)) form a product template (PT) domain region. The tract at residues 1322–1458 (HQITAETIES…ATVRFEDPAA (137 aa)) is N-terminal hotdog fold. The 311-residue stretch at 1322–1632 (HQITAETIES…FRRVPRLLMD (311 aa)) folds into the PKS/mFAS DH domain. The active-site Proton acceptor; for dehydratase activity is the His1354. Residues 1482–1632 (VEGKASRLSK…FRRVPRLLMD (151 aa)) form a C-terminal hotdog fold region. Asp1543 functions as the Proton donor; for dehydratase activity in the catalytic mechanism. Over residues 1663-1686 (SVPEISAPSPSIVVSDSTANNTLT) the composition is skewed to polar residues. Residues 1663–1723 (SVPEISAPSP…PESESAEPLG (61 aa)) form a disordered region. Positions 1698-1709 (SSSESSTPKESP) are enriched in low complexity. The Carrier domain maps to 1720-1797 (EPLGNTVSQC…EMTAWIEEYC (78 aa)). Ser1757 carries the O-(pantetheine 4'-phosphoryl)serine modification.

Requires pantetheine 4'-phosphate as cofactor.

It functions in the pathway secondary metabolite biosynthesis. Functionally, non-reducing polyketide synthase; part of the gene cluster that mediates the biosynthesis of neosartoricin B, a prenylated anthracenone that probably exhibits T-cell antiproliferative activity, suggestive of a physiological role as an immunosuppressive agent. The non-reducing polyketide synthase nscA probably synthesizes and cyclizes the decaketide backbone. The hydrolase nscB then mediates the product release through hydrolysis followed by spontaneous decarboxylation. The prenyltransferase nscD catalyzes the addition of the dimethylallyl group to the aromatic C5. The FAD-dependent monooxygenase nscC is then responsible for the stereospecific hydroxylation at C2. Neosartoricin B can be converted into two additional compounds neosartoricins C and D. Neosartoricin C is a spirocyclic compound that is cyclized through the attack of C3 hydroxyl on C14, followed by dehydration. On the other hand, neosartoricin D is a further cyclized compound in which attack of C2 on C14 in neosartoricin C results in the formation of the acetal-containing dioxabicyclo-octanone ring. Both of these compounds are novel and possibly represent related metabolites of the gene cluster. The polypeptide is Non-reducing polyketide synthase nscA (Arthroderma gypseum (strain ATCC MYA-4604 / CBS 118893) (Microsporum gypseum)).